We begin with the raw amino-acid sequence, 114 residues long: Cystatin Pr17a (114 aa).

A signal peptide spans 1 to 18 (MSCLKIITLFLFLAAVIA). The region spanning 31–109 (GAPEQINPND…QAWLKKTSVK (79 aa)) is the Cystatin domain. Cys-93 and Cys-113 are joined by a disulfide.

The protein belongs to the cystatin family. In terms of tissue distribution, expressed by the venom gland (posterior main gland) (at protein level).

Its subcellular location is the secreted. The polypeptide is Cystatin Pr17a (Platymeris rhadamanthus (Red spot assassin bug)).